A 380-amino-acid chain; its full sequence is Glycine betaine/carnitine/choline transport ATP-binding protein OpuCA (380 aa).

Residues 2–236 enclose the ABC transporter domain; the sequence is LKLEQVSKVY…PANEFVEEFI (235 aa). 35–42 is a binding site for ATP; the sequence is GPSGCGKT. 2 consecutive CBS domains span residues 255-314 and 315-373; these read MNRT…VGDV and YRSD…WGDE.

Belongs to the ABC transporter superfamily. In terms of assembly, the complex is composed of two ATP-binding proteins (OpuCA), two transmembrane proteins (OpuCB and OpuCD) and a solute-binding protein (OpuCC).

With respect to regulation, binds cyclic di-AMP (c-di-AMP), which may regulate the transporter activity. Functionally, involved in a high affinity multicomponent binding-protein-dependent transport system for glycine betaine, carnitine and choline; probably responsible for energy coupling to the transport system. The chain is Glycine betaine/carnitine/choline transport ATP-binding protein OpuCA (opuCA) from Bacillus subtilis (strain 168).